The chain runs to 370 residues: Cobalt-precorrin-5B C(1)-methyltransferase (370 aa).

It belongs to the CbiD family.

The catalysed reaction is Co-precorrin-5B + S-adenosyl-L-methionine = Co-precorrin-6A + S-adenosyl-L-homocysteine. Its pathway is cofactor biosynthesis; adenosylcobalamin biosynthesis; cob(II)yrinate a,c-diamide from sirohydrochlorin (anaerobic route): step 6/10. Catalyzes the methylation of C-1 in cobalt-precorrin-5B to form cobalt-precorrin-6A. This chain is Cobalt-precorrin-5B C(1)-methyltransferase, found in Pseudomonas syringae pv. tomato (strain ATCC BAA-871 / DC3000).